A 928-amino-acid polypeptide reads, in one-letter code: Putative replication origin binding protein (928 aa).

A Helicase ATP-binding domain is found at 386 to 516; that stretch reads NIVPPKGHIT…QVLRDILMTA (131 aa). 399–406 is an ATP binding site; the sequence is ASLGTGKT. The DEAD box signature appears at 484-487; the sequence is DECD.

The protein belongs to the herpesviridae oribp family.

Displays bipolar ssDNA and dsDNA unwinding activities that require the same core catalytic residues for unwinding in either direction, the 3'-5' direction being more robust. This Escherichia coli (Enterobacteria phage T5) protein is Putative replication origin binding protein.